The following is a 491-amino-acid chain: Ketol-acid reductoisomerase (NADP(+)) (491 aa).

The 194-residue stretch at 15-208 (AQLGKCRFMG…GGHRAGVLES (194 aa)) folds into the KARI N-terminal Rossmann domain. Residues 45–48 (CGAQ), Arg-68, Arg-76, Ser-78, and 108–110 (DKQ) each bind NADP(+). The active site involves His-132. Gly-158 is an NADP(+) binding site. KARI C-terminal knotted domains lie at 209 to 344 (SFVA…TAPQ) and 345 to 484 (YEGK…MTDM). Mg(2+) contacts are provided by Asp-217, Glu-221, Glu-389, and Glu-393. Substrate is bound at residue Ser-414.

It belongs to the ketol-acid reductoisomerase family. The cofactor is Mg(2+).

The enzyme catalyses (2R)-2,3-dihydroxy-3-methylbutanoate + NADP(+) = (2S)-2-acetolactate + NADPH + H(+). The catalysed reaction is (2R,3R)-2,3-dihydroxy-3-methylpentanoate + NADP(+) = (S)-2-ethyl-2-hydroxy-3-oxobutanoate + NADPH + H(+). It participates in amino-acid biosynthesis; L-isoleucine biosynthesis; L-isoleucine from 2-oxobutanoate: step 2/4. The protein operates within amino-acid biosynthesis; L-valine biosynthesis; L-valine from pyruvate: step 2/4. In terms of biological role, involved in the biosynthesis of branched-chain amino acids (BCAA). Catalyzes an alkyl-migration followed by a ketol-acid reduction of (S)-2-acetolactate (S2AL) to yield (R)-2,3-dihydroxy-isovalerate. In the isomerase reaction, S2AL is rearranged via a Mg-dependent methyl migration to produce 3-hydroxy-3-methyl-2-ketobutyrate (HMKB). In the reductase reaction, this 2-ketoacid undergoes a metal-dependent reduction by NADPH to yield (R)-2,3-dihydroxy-isovalerate. This Citrobacter koseri (strain ATCC BAA-895 / CDC 4225-83 / SGSC4696) protein is Ketol-acid reductoisomerase (NADP(+)).